The primary structure comprises 488 residues: E3 ubiquitin-protein ligase TRIM39 (488 aa).

The segment at 29–70 (CSVCLEYLKEPVIIECGHNFCKACITRWWEDLERDFPCPVCR) adopts an RING-type zinc-finger fold. A B box-type zinc finger spans residues 102-143 (RDESLCSQHHEPLSLFCYEDQEAVCLICAISHTHRAHTVVPM). 4 residues coordinate Zn(2+): Cys-107, His-110, Cys-129, and His-135. A coiled-coil region spans residues 181-250 (ELKRLVESRR…AHLAAEVEGK (70 aa)). Interaction with CDKN1A regions lie at residues 268-307 (KCEK…QLIA) and 359-488 (TSGR…TDWE). The 196-residue stretch at 289–484 (SHFPRQYFAL…NAAPLTIRPP (196 aa)) folds into the B30.2/SPRY domain.

This sequence belongs to the TRIM/RBCC family. In terms of assembly, interacts with MOAP1. Interacts with CDKN1A. Autoubiquitinated.

The protein localises to the cytoplasm. It localises to the cytosol. It is found in the mitochondrion. The protein resides in the nucleus. It catalyses the reaction S-ubiquitinyl-[E2 ubiquitin-conjugating enzyme]-L-cysteine + [acceptor protein]-L-lysine = [E2 ubiquitin-conjugating enzyme]-L-cysteine + N(6)-ubiquitinyl-[acceptor protein]-L-lysine.. The protein operates within protein modification; protein ubiquitination. Functionally, E3 ubiquitin-protein ligase. May facilitate apoptosis by inhibiting APC/C-Cdh1-mediated poly-ubiquitination and subsequent proteasome-mediated degradation of the pro-apoptotic protein MOAP1. Regulates the G1/S transition of the cell cycle and DNA damage-induced G2 arrest by stabilizing CDKN1A/p21. Positively regulates CDKN1A/p21 stability by competing with DTL for CDKN1A/p21 binding, therefore disrupting DCX(DTL) E3 ubiquitin ligase complex-mediated CDKN1A/p21 ubiquitination and degradation. The protein is E3 ubiquitin-protein ligase TRIM39 (Trim39) of Rattus norvegicus (Rat).